Here is a 182-residue protein sequence, read N- to C-terminus: Probable RNA 2'-phosphotransferase (182 aa).

This sequence belongs to the KptA/TPT1 family.

In terms of biological role, removes the 2'-phosphate from RNA via an intermediate in which the phosphate is ADP-ribosylated by NAD followed by a presumed transesterification to release the RNA and generate ADP-ribose 1''-2''-cyclic phosphate (APPR&gt;P). May function as an ADP-ribosylase. The sequence is that of Probable RNA 2'-phosphotransferase from Herpetosiphon aurantiacus (strain ATCC 23779 / DSM 785 / 114-95).